A 101-amino-acid chain; its full sequence is Integration host factor subunit alpha (101 aa).

The protein belongs to the bacterial histone-like protein family. In terms of assembly, heterodimer of an alpha and a beta chain.

In terms of biological role, this protein is one of the two subunits of integration host factor, a specific DNA-binding protein that functions in genetic recombination as well as in transcriptional and translational control. This is Integration host factor subunit alpha from Saccharophagus degradans (strain 2-40 / ATCC 43961 / DSM 17024).